The chain runs to 424 residues: MDKFRVYGQSRLSGSVNISGAKNAALPILFAAILATEPVKLTNVPELKDIETTLNILRQLGVIANRDETGAVLLDASNINHFTAPYELVKTMRASIWALAPLVARFHQAQVSLPGGCSIGARPVDLHISGLEKLGADIVLEEGYVKAQVSDRLVGTRIVIEKVSVGATLSIMMAATLAKGTTVIENAAREPEIVDTADFLNKMGAKITGAGSDHITTEGVERLTGCEHSIVPDRIETGTFLIAAAISGGRVVCQNTKADTLDAVIDKLREAGAQVDVTENSITLDMLGNRPKAVNIRTAPHPGFPTDMQAQFTLLNMVAEGTSIITETIFENRFMHIPELIRMGGKAEIEGNTAVCHGVEQLSGTEVIATDLRASISLVLAGCIATGETIVDRIYHIDRGYEHIEDKLRALGAKIERFSRSDEA.

22–23 (KN) is a binding site for phosphoenolpyruvate. UDP-N-acetyl-alpha-D-glucosamine is bound at residue R93. C117 acts as the Proton donor in catalysis. C117 bears the 2-(S-cysteinyl)pyruvic acid O-phosphothioketal mark. UDP-N-acetyl-alpha-D-glucosamine is bound by residues 122 to 126 (RPVDL), 162 to 165 (KVSV), D307, and I329.

This sequence belongs to the EPSP synthase family. MurA subfamily.

It is found in the cytoplasm. The enzyme catalyses phosphoenolpyruvate + UDP-N-acetyl-alpha-D-glucosamine = UDP-N-acetyl-3-O-(1-carboxyvinyl)-alpha-D-glucosamine + phosphate. The protein operates within cell wall biogenesis; peptidoglycan biosynthesis. Cell wall formation. Adds enolpyruvyl to UDP-N-acetylglucosamine. The polypeptide is UDP-N-acetylglucosamine 1-carboxyvinyltransferase (Haemophilus influenzae (strain 86-028NP)).